A 474-amino-acid polypeptide reads, in one-letter code: Methylenetetrahydrofolate--tRNA-(uracil-5-)-methyltransferase TrmFO (474 aa).

13–18 (GGGLAG) is an FAD binding site.

It belongs to the MnmG family. TrmFO subfamily. FAD is required as a cofactor.

Its subcellular location is the cytoplasm. The enzyme catalyses uridine(54) in tRNA + (6R)-5,10-methylene-5,6,7,8-tetrahydrofolate + NADH + H(+) = 5-methyluridine(54) in tRNA + (6S)-5,6,7,8-tetrahydrofolate + NAD(+). It catalyses the reaction uridine(54) in tRNA + (6R)-5,10-methylene-5,6,7,8-tetrahydrofolate + NADPH + H(+) = 5-methyluridine(54) in tRNA + (6S)-5,6,7,8-tetrahydrofolate + NADP(+). Functionally, catalyzes the folate-dependent formation of 5-methyl-uridine at position 54 (M-5-U54) in all tRNAs. The polypeptide is Methylenetetrahydrofolate--tRNA-(uracil-5-)-methyltransferase TrmFO (Bartonella tribocorum (strain CIP 105476 / IBS 506)).